Reading from the N-terminus, the 690-residue chain is Lipase 2 (690 aa).

A signal peptide spans Met-1–Ala-37. Positions Leu-52–Lys-71 are enriched in polar residues. Residues Leu-52–Lys-266 are disordered. Residues Gln-72 to Gly-81 are compositionally biased toward basic and acidic residues. 3 stretches are compositionally biased toward polar residues: residues Lys-82–Gln-114, Ser-124–Ile-171, and Pro-185–Ala-206. 2 stretches are compositionally biased toward basic and acidic residues: residues Ile-225–Glu-237 and Lys-257–Lys-266. Active-site charge relay system residues include Ser-412 and His-645.

It belongs to the AB hydrolase superfamily. Lipase family.

Its subcellular location is the secreted. It carries out the reaction a triacylglycerol + H2O = a diacylglycerol + a fatty acid + H(+). This Staphylococcus aureus (strain NCTC 8325 / PS 47) protein is Lipase 2 (lip2).